Here is a 2849-residue protein sequence, read N- to C-terminus: Immunoglobulin-like and fibronectin type III domain-containing protein 1 (2849 aa).

A disordered region spans residues alanine 82–leucine 108. Over residues glycine 90–serine 101 the composition is skewed to low complexity. In terms of domain architecture, Ig-like 1 spans proline 187–threonine 277. Positions isoleucine 347–histidine 380 form a coiled coil. The region spanning proline 468 to glycine 557 is the Ig-like 2 domain. 12 disordered regions span residues leucine 577–leucine 600, valine 652–arginine 760, tyrosine 864–serine 924, valine 962–glutamine 981, glutamate 1061–alanine 1103, threonine 1221–glycine 1258, serine 1312–histidine 1338, arginine 1350–glutamate 1384, glutamate 1498–glutamate 1523, glutamate 1654–isoleucine 1675, glutamine 1724–histidine 1780, and glycine 1827–histidine 2055. A compositionally biased stretch (basic and acidic residues) spans histidine 717–arginine 742. A compositionally biased stretch (polar residues) spans glycine 866–serine 880. Positions arginine 1070–glycine 1084 are enriched in gly residues. A compositionally biased stretch (polar residues) spans serine 1873 to leucine 1882. Basic and acidic residues-rich tracts occupy residues serine 1988–glutamine 2004 and serine 2012–serine 2021. Residues proline 2034–threonine 2137 form the Ig-like 3 domain. 3 consecutive Fibronectin type-III domains span residues proline 2244 to glutamate 2339, proline 2344 to proline 2443, and proline 2445 to alanine 2540. The Ig-like 4 domain maps to proline 2544–threonine 2628. The 95-residue stretch at alanine 2641–glutamine 2735 folds into the Fibronectin type-III 4 domain. Residues proline 2749–threonine 2845 form the Ig-like 5 domain.

Interacts with FLNC. Interacts with KY. As to expression, isoform 1, isoform 3 and isoform 4 are expressed in skeletal muscle while isoform 2 is detected in both skeletal muscle and heart (at protein level).

The protein localises to the nucleus. It localises to the cytoplasm. The protein resides in the myofibril. Its subcellular location is the sarcomere. It is found in the z line. The chain is Immunoglobulin-like and fibronectin type III domain-containing protein 1 (Igfn1) from Mus musculus (Mouse).